Here is a 178-residue protein sequence, read N- to C-terminus: MKQLLDFLPLVVFFIFYKLYDIFVASGALIVASAIALAVSWLLYRKVEKMALFTFALVAIFGTLTIALHNPDFIKWKVTIIYGLFTLALLFSHWFMQQPLIQKMLGKEIRLPTTAWRRLNIAWALFFLACGLANIYVAFWLSQDTWMNFKVFGLSGLTLLFTLLSGIYIYRLMPQDEK.

5 helical membrane-spanning segments follow: residues 22–42 (IFVA…VSWL), 50–70 (MALF…ALHN), 76–96 (WKVT…HWFM), 121–141 (IAWA…AFWL), and 149–169 (FKVF…GIYI).

Belongs to the YciB family.

Its subcellular location is the cell inner membrane. Plays a role in cell envelope biogenesis, maintenance of cell envelope integrity and membrane homeostasis. The protein is Inner membrane-spanning protein YciB of Erwinia tasmaniensis (strain DSM 17950 / CFBP 7177 / CIP 109463 / NCPPB 4357 / Et1/99).